The following is a 348-amino-acid chain: Holliday junction branch migration complex subunit RuvB (348 aa).

The interval 1-181 (MEERMITPQQ…FGVISRLEFY (181 aa)) is large ATPase domain (RuvB-L). ATP is bound by residues leucine 20, arginine 21, glycine 62, lysine 65, threonine 66, threonine 67, arginine 171, tyrosine 181, and arginine 218. Residue threonine 66 participates in Mg(2+) binding. The small ATPAse domain (RuvB-S) stretch occupies residues 182–252 (EVEDLIRIIT…LAGKSLDRLE (71 aa)). The interval 255–348 (PAGLDRIDQK…GDSLFDAAED (94 aa)) is head domain (RuvB-H). Residues arginine 310 and arginine 315 each contribute to the DNA site. The tract at residues 329–348 (VNSSHQEGGQGDSLFDAAED) is disordered.

The protein belongs to the RuvB family. In terms of assembly, homohexamer. Forms an RuvA(8)-RuvB(12)-Holliday junction (HJ) complex. HJ DNA is sandwiched between 2 RuvA tetramers; dsDNA enters through RuvA and exits via RuvB. An RuvB hexamer assembles on each DNA strand where it exits the tetramer. Each RuvB hexamer is contacted by two RuvA subunits (via domain III) on 2 adjacent RuvB subunits; this complex drives branch migration. In the full resolvosome a probable DNA-RuvA(4)-RuvB(12)-RuvC(2) complex forms which resolves the HJ.

It is found in the cytoplasm. The catalysed reaction is ATP + H2O = ADP + phosphate + H(+). The RuvA-RuvB-RuvC complex processes Holliday junction (HJ) DNA during genetic recombination and DNA repair, while the RuvA-RuvB complex plays an important role in the rescue of blocked DNA replication forks via replication fork reversal (RFR). RuvA specifically binds to HJ cruciform DNA, conferring on it an open structure. The RuvB hexamer acts as an ATP-dependent pump, pulling dsDNA into and through the RuvAB complex. RuvB forms 2 homohexamers on either side of HJ DNA bound by 1 or 2 RuvA tetramers; 4 subunits per hexamer contact DNA at a time. Coordinated motions by a converter formed by DNA-disengaged RuvB subunits stimulates ATP hydrolysis and nucleotide exchange. Immobilization of the converter enables RuvB to convert the ATP-contained energy into a lever motion, pulling 2 nucleotides of DNA out of the RuvA tetramer per ATP hydrolyzed, thus driving DNA branch migration. The RuvB motors rotate together with the DNA substrate, which together with the progressing nucleotide cycle form the mechanistic basis for DNA recombination by continuous HJ branch migration. Branch migration allows RuvC to scan DNA until it finds its consensus sequence, where it cleaves and resolves cruciform DNA. In Desulfitobacterium hafniense (strain DSM 10664 / DCB-2), this protein is Holliday junction branch migration complex subunit RuvB.